Here is a 138-residue protein sequence, read N- to C-terminus: Nucleoside diphosphate kinase (138 aa).

ATP is bound by residues K10, F58, R86, T92, R103, and N113. Catalysis depends on H116, which acts as the Pros-phosphohistidine intermediate.

It belongs to the NDK family. As to quaternary structure, homotetramer. The cofactor is Mg(2+).

The protein localises to the cytoplasm. The catalysed reaction is a 2'-deoxyribonucleoside 5'-diphosphate + ATP = a 2'-deoxyribonucleoside 5'-triphosphate + ADP. The enzyme catalyses a ribonucleoside 5'-diphosphate + ATP = a ribonucleoside 5'-triphosphate + ADP. Its function is as follows. Major role in the synthesis of nucleoside triphosphates other than ATP. The ATP gamma phosphate is transferred to the NDP beta phosphate via a ping-pong mechanism, using a phosphorylated active-site intermediate. The protein is Nucleoside diphosphate kinase of Actinobacillus pleuropneumoniae serotype 7 (strain AP76).